The primary structure comprises 257 residues: Probable amino-acid ABC transporter-binding protein HI_1080 (257 aa).

A signal peptide spans 1–23 (MKKLLFTTALLTGAIAFSTFSHA).

The protein belongs to the bacterial solute-binding protein 3 family.

The protein localises to the periplasm. In terms of biological role, probably part of a binding-protein-dependent transport system for an amino acid. The polypeptide is Probable amino-acid ABC transporter-binding protein HI_1080 (Haemophilus influenzae (strain ATCC 51907 / DSM 11121 / KW20 / Rd)).